A 141-amino-acid chain; its full sequence is Large ribosomal subunit protein uL11 (141 aa).

The protein belongs to the universal ribosomal protein uL11 family. Part of the ribosomal stalk of the 50S ribosomal subunit. Interacts with L10 and the large rRNA to form the base of the stalk. L10 forms an elongated spine to which L12 dimers bind in a sequential fashion forming a multimeric L10(L12)X complex. In terms of processing, one or more lysine residues are methylated.

Functionally, forms part of the ribosomal stalk which helps the ribosome interact with GTP-bound translation factors. This Synechococcus sp. (strain WH7803) protein is Large ribosomal subunit protein uL11.